The chain runs to 299 residues: Zeta-sarcoglycan (299 aa).

Over 1-37 the chain is Cytoplasmic; the sequence is MTREQYILATQQNNLPRTENAQLYPVGIYGWRKRCLY. Residues 38–58 form a helical; Signal-anchor for type II membrane protein membrane-spanning segment; sequence FFVLLLLVTMIVNLAMTIWIL. At 59 to 299 the chain is on the extracellular side; the sequence is KVMNFTVDGM…QSSSNICLWS (241 aa). Residues Asn62 and Asn110 are each glycosylated (N-linked (GlcNAc...) asparagine). The cysteines at positions 273 and 289 are disulfide-linked.

It belongs to the sarcoglycan beta/delta/gamma/zeta family.

The protein localises to the cell membrane. It is found in the sarcolemma. The protein resides in the cytoplasm. It localises to the cytoskeleton. Functionally, component of the sarcoglycan complex, a subcomplex of the dystrophin-glycoprotein complex which forms a link between the F-actin cytoskeleton and the extracellular matrix. May play a role in the maintenance of striated muscle membrane stability. The chain is Zeta-sarcoglycan (SGCZ) from Homo sapiens (Human).